Consider the following 471-residue polypeptide: ATP synthase subunit beta (471 aa).

156 to 163 contacts ATP; that stretch reads GGAGVGKT.

The protein belongs to the ATPase alpha/beta chains family. In terms of assembly, F-type ATPases have 2 components, CF(1) - the catalytic core - and CF(0) - the membrane proton channel. CF(1) has five subunits: alpha(3), beta(3), gamma(1), delta(1), epsilon(1). CF(0) has three main subunits: a(1), b(2) and c(9-12). The alpha and beta chains form an alternating ring which encloses part of the gamma chain. CF(1) is attached to CF(0) by a central stalk formed by the gamma and epsilon chains, while a peripheral stalk is formed by the delta and b chains.

The protein resides in the cell membrane. It catalyses the reaction ATP + H2O + 4 H(+)(in) = ADP + phosphate + 5 H(+)(out). Produces ATP from ADP in the presence of a proton gradient across the membrane. The catalytic sites are hosted primarily by the beta subunits. In Mycoplasmoides gallisepticum (strain R(low / passage 15 / clone 2)) (Mycoplasma gallisepticum), this protein is ATP synthase subunit beta.